Here is a 709-residue protein sequence, read N- to C-terminus: Eukaryotic translation initiation factor 3 subunit B (709 aa).

Residues 1-98 are sufficient for interaction with HCR1 and TIF32; it reads MSINEEEYLR…LFIQYKNVAD (98 aa). The segment at 1–221 is sufficient for interaction with PIC8; it reads MSINEEEYLR…GIQAWGGADF (221 aa). In terms of domain architecture, RRM spans 37 to 124; it reads NYVIVDGAPI…HRLLVNRLSD (88 aa).

It belongs to the eIF-3 subunit B family. As to quaternary structure, component of the eukaryotic translation initiation factor 3 (eIF-3) complex.

The protein resides in the cytoplasm. Its function is as follows. RNA-binding component of the eukaryotic translation initiation factor 3 (eIF-3) complex, which is involved in protein synthesis of a specialized repertoire of mRNAs and, together with other initiation factors, stimulates binding of mRNA and methionyl-tRNAi to the 40S ribosome. The eIF-3 complex specifically targets and initiates translation of a subset of mRNAs involved in cell proliferation. This Lodderomyces elongisporus (strain ATCC 11503 / CBS 2605 / JCM 1781 / NBRC 1676 / NRRL YB-4239) (Yeast) protein is Eukaryotic translation initiation factor 3 subunit B.